Here is a 257-residue protein sequence, read N- to C-terminus: Imidazole glycerol phosphate synthase subunit HisF (257 aa).

Residues aspartate 11 and aspartate 130 contribute to the active site.

It belongs to the HisA/HisF family. In terms of assembly, heterodimer of HisH and HisF.

The protein resides in the cytoplasm. The catalysed reaction is 5-[(5-phospho-1-deoxy-D-ribulos-1-ylimino)methylamino]-1-(5-phospho-beta-D-ribosyl)imidazole-4-carboxamide + L-glutamine = D-erythro-1-(imidazol-4-yl)glycerol 3-phosphate + 5-amino-1-(5-phospho-beta-D-ribosyl)imidazole-4-carboxamide + L-glutamate + H(+). Its pathway is amino-acid biosynthesis; L-histidine biosynthesis; L-histidine from 5-phospho-alpha-D-ribose 1-diphosphate: step 5/9. Its function is as follows. IGPS catalyzes the conversion of PRFAR and glutamine to IGP, AICAR and glutamate. The HisF subunit catalyzes the cyclization activity that produces IGP and AICAR from PRFAR using the ammonia provided by the HisH subunit. The protein is Imidazole glycerol phosphate synthase subunit HisF of Photobacterium profundum (strain SS9).